The sequence spans 161 residues: uncharacterized protein (161 aa).

Belongs to the M.jannaschii MJ0150/MJ0739/MJ0745/MJ1460/MJ1642 family.

This is an uncharacterized protein from Methanocaldococcus jannaschii (strain ATCC 43067 / DSM 2661 / JAL-1 / JCM 10045 / NBRC 100440) (Methanococcus jannaschii).